Reading from the N-terminus, the 146-residue chain is Hut operon positive regulatory protein (146 aa).

The protein belongs to the HutP family. As to quaternary structure, homohexamer.

Its function is as follows. Antiterminator that binds to cis-acting regulatory sequences on the mRNA in the presence of histidine, thereby suppressing transcription termination and activating the hut operon for histidine utilization. The protein is Hut operon positive regulatory protein of Bacillus cereus (strain AH820).